Here is a 210-residue protein sequence, read N- to C-terminus: Thiamine-phosphate synthase (210 aa).

Residues 39–43 (QLREK) and N71 each bind 4-amino-2-methyl-5-(diphosphooxymethyl)pyrimidine. Mg(2+)-binding residues include D72 and D91. S110 contacts 4-amino-2-methyl-5-(diphosphooxymethyl)pyrimidine. Residue 136-138 (TST) participates in 2-[(2R,5Z)-2-carboxy-4-methylthiazol-5(2H)-ylidene]ethyl phosphate binding. 4-amino-2-methyl-5-(diphosphooxymethyl)pyrimidine is bound at residue K139. Residues G166 and 186-187 (VS) contribute to the 2-[(2R,5Z)-2-carboxy-4-methylthiazol-5(2H)-ylidene]ethyl phosphate site.

This sequence belongs to the thiamine-phosphate synthase family. Requires Mg(2+) as cofactor.

The catalysed reaction is 2-[(2R,5Z)-2-carboxy-4-methylthiazol-5(2H)-ylidene]ethyl phosphate + 4-amino-2-methyl-5-(diphosphooxymethyl)pyrimidine + 2 H(+) = thiamine phosphate + CO2 + diphosphate. It carries out the reaction 2-(2-carboxy-4-methylthiazol-5-yl)ethyl phosphate + 4-amino-2-methyl-5-(diphosphooxymethyl)pyrimidine + 2 H(+) = thiamine phosphate + CO2 + diphosphate. It catalyses the reaction 4-methyl-5-(2-phosphooxyethyl)-thiazole + 4-amino-2-methyl-5-(diphosphooxymethyl)pyrimidine + H(+) = thiamine phosphate + diphosphate. The protein operates within cofactor biosynthesis; thiamine diphosphate biosynthesis; thiamine phosphate from 4-amino-2-methyl-5-diphosphomethylpyrimidine and 4-methyl-5-(2-phosphoethyl)-thiazole: step 1/1. Its function is as follows. Condenses 4-methyl-5-(beta-hydroxyethyl)thiazole monophosphate (THZ-P) and 2-methyl-4-amino-5-hydroxymethyl pyrimidine pyrophosphate (HMP-PP) to form thiamine monophosphate (TMP). The chain is Thiamine-phosphate synthase from Ruminiclostridium cellulolyticum (strain ATCC 35319 / DSM 5812 / JCM 6584 / H10) (Clostridium cellulolyticum).